The primary structure comprises 325 residues: Large ribosomal subunit protein uL1m (325 aa).

Residues 1–50 constitute a mitochondrion transit peptide; it reads MAATVRCFGRVLIHHQRCSLATVTSQTSLYPCCIYVPVPNRHFAAAAKPA. The tract at residues 47–66 is disordered; sequence AKPAKKTKKGTKEKASNEKK. Residues 56–66 are compositionally biased toward basic and acidic residues; sequence GTKEKASNEKK.

It belongs to the universal ribosomal protein uL1 family.

It is found in the mitochondrion. The polypeptide is Large ribosomal subunit protein uL1m (MRPL1) (Bos taurus (Bovine)).